The following is a 700-amino-acid chain: Pentatricopeptide repeat-containing protein 1, mitochondrial (700 aa).

Residues 49 to 93 (SSSQLPLGQERQENTGSLGSDPSHSNSTATQEEDEEEEESFGTLS) are disordered. Residues 62–78 (NTGSLGSDPSHSNSTAT) show a composition bias toward polar residues. Positions 79 to 88 (QEEDEEEEES) are enriched in acidic residues. PPR repeat units lie at residues 135-171 (TPYWYFLQCKHLIKEGKLVEALDLFERQMLKEERLQP), 172-206 (MESNYTVLIGGCGRVGYLKKAFNLYNQMKKRDLEP), 207-245 (SDATYTALFNVCAESPWKDSALQSALKLRQQLQAKNFEL), 246-280 (NLKTYHALLKMAAKCADLRMCLDVFKEIIHKGHVV), 281-317 (TEETFSFLLMGCIQDKKTGFRYALQVWRLMLSLGLQP), and 318-354 (SRDSYNLLLVAARDCGLGDPQVASELLLKPREEATVL). Residues 393–414 (SQALGPPEPPEARVPGKAQPEV) are disordered. PPR repeat units lie at residues 519-553 (DLTFFNTLVRKKSKLGDLEGAKALLPVLAKRGLVP), 554-585 (NLQTFCNLAIGCHRPKDGLQLLTDMKKSQVTP), and 586-620 (NTHIYSALINAAIRKLNYTYLISILKDMKQNRVPV). Residues 672-700 (HPWQKFRTKPQGDQDTGKEADDGCALGGR) form a disordered region. Over residues 681 to 692 (PQGDQDTGKEAD) the composition is skewed to basic and acidic residues.

Belongs to the PTCD1 family. In terms of assembly, associates with mitochondrial leucine tRNAs. Interacts with ELAC2. In terms of tissue distribution, abundant in testes, skeletal muscle and heart.

It is found in the mitochondrion. It localises to the mitochondrion matrix. Mitochondrial protein implicated in negative regulation of leucine tRNA levels, as well as negative regulation of mitochondria-encoded proteins and COX activity. Also affects the 3'-processing of mitochondrial tRNAs. The protein is Pentatricopeptide repeat-containing protein 1, mitochondrial (PTCD1) of Homo sapiens (Human).